Reading from the N-terminus, the 323-residue chain is DNA repair and recombination protein RadA (323 aa).

Position 115–122 (115–122 (GEFGSGKT)) interacts with ATP.

Belongs to the eukaryotic RecA-like protein family.

Involved in DNA repair and in homologous recombination. Binds and assemble on single-stranded DNA to form a nucleoprotein filament. Hydrolyzes ATP in a ssDNA-dependent manner and promotes DNA strand exchange between homologous DNA molecules. This chain is DNA repair and recombination protein RadA, found in Thermoplasma volcanium (strain ATCC 51530 / DSM 4299 / JCM 9571 / NBRC 15438 / GSS1).